The chain runs to 790 residues: uncharacterized protein (790 aa).

The 136-residue stretch at 37–172 folds into the TBDR plug domain; the sequence is APVPVPVNGN…NGGVIDAKIK (136 aa). In terms of domain architecture, TBDR beta-barrel spans 178 to 790; the sequence is DSKVKLGYRT…TFWLDVSMKF (613 aa).

The protein belongs to the TonB-dependent receptor family.

It localises to the cell outer membrane. This is an uncharacterized protein from Escherichia coli (strain K12).